A 133-amino-acid polypeptide reads, in one-letter code: ATP synthase epsilon chain, chloroplastic (133 aa).

It belongs to the ATPase epsilon chain family. In terms of assembly, F-type ATPases have 2 components, CF(1) - the catalytic core - and CF(0) - the membrane proton channel. CF(1) has five subunits: alpha(3), beta(3), gamma(1), delta(1), epsilon(1). CF(0) has three main subunits: a, b and c.

Its subcellular location is the plastid. The protein resides in the chloroplast thylakoid membrane. Its function is as follows. Produces ATP from ADP in the presence of a proton gradient across the membrane. This is ATP synthase epsilon chain, chloroplastic from Lotus japonicus (Lotus corniculatus var. japonicus).